A 432-amino-acid polypeptide reads, in one-letter code: Enolase (432 aa).

Glutamine 167 contributes to the (2R)-2-phosphoglycerate binding site. Glutamate 209 acts as the Proton donor in catalysis. The Mg(2+) site is built by aspartate 246, glutamate 291, and aspartate 318. The (2R)-2-phosphoglycerate site is built by lysine 343, arginine 372, serine 373, and lysine 394. Lysine 343 (proton acceptor) is an active-site residue.

This sequence belongs to the enolase family. As to quaternary structure, component of the RNA degradosome, a multiprotein complex involved in RNA processing and mRNA degradation. Mg(2+) is required as a cofactor.

Its subcellular location is the cytoplasm. It localises to the secreted. The protein localises to the cell surface. The enzyme catalyses (2R)-2-phosphoglycerate = phosphoenolpyruvate + H2O. Its pathway is carbohydrate degradation; glycolysis; pyruvate from D-glyceraldehyde 3-phosphate: step 4/5. Catalyzes the reversible conversion of 2-phosphoglycerate (2-PG) into phosphoenolpyruvate (PEP). It is essential for the degradation of carbohydrates via glycolysis. In Aliivibrio fischeri (strain MJ11) (Vibrio fischeri), this protein is Enolase.